A 123-amino-acid polypeptide reads, in one-letter code: MIATPIRLAKSAYEPMIKFVGTRHPLVKHATEVVVHPCATNGMLPGSKECIPVSKFMENYKPFRVVPIKHSANAGLSSSKTSVFVNRPLQKDELASIFELPARFRYKPINEHELESINSGGAW.

A mitochondrion-targeting transit peptide spans 1 to 8 (MIATPIRL).

The protein belongs to the alpha-ketoglutarate dehydrogenase component 4 family. Component of the 2-oxoglutarate dehydrogenase complex (OGDC), also called alpha-ketoglutarate dehydrogenase (KGDH) complex. The copmplex is composed of the catalytic subunits OGDH (2-oxoglutarate dehydrogenase KGD1; also called E1 subunit), DLST (dihydrolipoamide succinyltransferase KGD2; also called E2 subunit) and DLD (dihydrolipoamide dehydrogenase LPD1; also called E3 subunit), and the assembly factor KGD4. Within OGDC, interacts (via N-terminus) with E3 subunit and (via C-terminus) with the complex core formed by E1 and E2 subunits.

It is found in the mitochondrion. In terms of biological role, molecular adapter that is necessary to a form a stable 2-oxoglutarate dehydrogenase enzyme complex (OGDC). Required for incorporation of the E3 subunit (LPD1) into the E1-E2 core (KGD1-KGD2) of mitochondrial OGDC, and acting as a stability factor for the fully assembled complex. The chain is Alpha-ketoglutarate dehydrogenase subunit 4, mitochondrial from Saccharomyces cerevisiae (strain ATCC 204508 / S288c) (Baker's yeast).